Consider the following 189-residue polypeptide: Threonylcarbamoyl-AMP synthase (189 aa).

The YrdC-like domain occupies 3–189 (TTSVTEAAEC…NALTGEVIRP (187 aa)).

It belongs to the SUA5 family. TsaC subfamily.

It is found in the cytoplasm. It carries out the reaction L-threonine + hydrogencarbonate + ATP = L-threonylcarbamoyladenylate + diphosphate + H2O. Functionally, required for the formation of a threonylcarbamoyl group on adenosine at position 37 (t(6)A37) in tRNAs that read codons beginning with adenine. Catalyzes the conversion of L-threonine, HCO(3)(-)/CO(2) and ATP to give threonylcarbamoyl-AMP (TC-AMP) as the acyladenylate intermediate, with the release of diphosphate. The protein is Threonylcarbamoyl-AMP synthase of Acinetobacter baumannii (strain ACICU).